We begin with the raw amino-acid sequence, 157 residues long: Transcriptional repressor NrdR (157 aa).

Residues 3–34 fold into a zinc finger; the sequence is CPFCSATDTKVIDSRLVADGHQVRRRRECLLC. Positions 49 to 139 constitute an ATP-cone domain; the sequence is PRVVKQDGSR…VYRAFEDVSE (91 aa).

This sequence belongs to the NrdR family. Zn(2+) serves as cofactor.

Negatively regulates transcription of bacterial ribonucleotide reductase nrd genes and operons by binding to NrdR-boxes. In Shewanella loihica (strain ATCC BAA-1088 / PV-4), this protein is Transcriptional repressor NrdR.